We begin with the raw amino-acid sequence, 464 residues long: ATP synthase subunit beta (464 aa).

ATP is bound at residue 152 to 159 (GGAGVGKT).

Belongs to the ATPase alpha/beta chains family. As to quaternary structure, F-type ATPases have 2 components, CF(1) - the catalytic core - and CF(0) - the membrane proton channel. CF(1) has five subunits: alpha(3), beta(3), gamma(1), delta(1), epsilon(1). CF(0) has three main subunits: a(1), b(2) and c(9-12). The alpha and beta chains form an alternating ring which encloses part of the gamma chain. CF(1) is attached to CF(0) by a central stalk formed by the gamma and epsilon chains, while a peripheral stalk is formed by the delta and b chains.

It localises to the cell inner membrane. It catalyses the reaction ATP + H2O + 4 H(+)(in) = ADP + phosphate + 5 H(+)(out). In terms of biological role, produces ATP from ADP in the presence of a proton gradient across the membrane. The catalytic sites are hosted primarily by the beta subunits. In Aliarcobacter butzleri (strain RM4018) (Arcobacter butzleri), this protein is ATP synthase subunit beta.